Consider the following 417-residue polypeptide: Snake venom metalloproteinase kistomin (417 aa).

Residues M1 to S20 form the signal peptide. Positions I21–P189 are excised as a propeptide. Residues A197–P391 enclose the Peptidase M12B domain. 3 disulfide bridges follow: C308–C386, C348–C370, and C350–C353. H333 contacts Zn(2+). The active site involves E334. Residues H337 and H343 each contribute to the Zn(2+) site. The propeptide occupies L392 to A417.

This sequence belongs to the venom metalloproteinase (M12B) family. P-I subfamily. As to quaternary structure, monomer. Requires Zn(2+) as cofactor. In terms of tissue distribution, expressed by the venom gland.

The protein resides in the secreted. Inhibited by EDTA, and O-phenanthrolene. Snake venom zinc metalloprotease that inhibits platelet aggregation by binding specifically to platelet glycoprotein VI (GP6) and platelet glycoprotein Ib alpha (GP1BA). It inhibits the interaction between collagen and platelet GP6 by cleaving GP6 (at '225-Glu-|-Ala-226' and '238-Val-|-Phe-239' bonds), and inhibits vWF-induced platelet aggregation by cleaving GP1BA and vWF. Cleavage of GP1BA occurs at two distinct sites to generate two soluble fragments. It also cleaves alpha- (FGA) and subsequently the gamma-chain (FGG) of fibrinogen, leaving the beta-chain unaffected. It also inhibits collagen-, convulxin- and ristocetin-induced platelet aggregation. It blocks the adhesion of platelet to immobilized collagen, but only exerts a slight inhibition to fibrinogen. In vivo, it exerts potent antithrombotic effect. This is Snake venom metalloproteinase kistomin from Calloselasma rhodostoma (Malayan pit viper).